The following is a 210-amino-acid chain: Ribosomal RNA small subunit methyltransferase G (210 aa).

S-adenosyl-L-methionine-binding positions include G75, F80, 98-100, 126-127, and R141; these read EST and AE.

This sequence belongs to the methyltransferase superfamily. RNA methyltransferase RsmG family.

It is found in the cytoplasm. In terms of biological role, specifically methylates the N7 position of a guanine in 16S rRNA. In Solibacter usitatus (strain Ellin6076), this protein is Ribosomal RNA small subunit methyltransferase G.